The primary structure comprises 61 residues: Small ribosomal subunit protein uS14 (61 aa).

Zn(2+) is bound by residues C24, C27, C40, and C43.

Belongs to the universal ribosomal protein uS14 family. Zinc-binding uS14 subfamily. In terms of assembly, part of the 30S ribosomal subunit. Contacts proteins S3 and S10. Zn(2+) is required as a cofactor.

In terms of biological role, binds 16S rRNA, required for the assembly of 30S particles and may also be responsible for determining the conformation of the 16S rRNA at the A site. The polypeptide is Small ribosomal subunit protein uS14 (Moorella thermoacetica (strain ATCC 39073 / JCM 9320)).